Here is a 470-residue protein sequence, read N- to C-terminus: 3-isopropylmalate dehydratase large subunit (470 aa).

Positions 294 to 307 are enriched in polar residues; sequence PDQNTGISGSTPNP. The tract at residues 294-313 is disordered; the sequence is PDQNTGISGSTPNPSDAADD. The [4Fe-4S] cluster site is built by C347, C407, and C410.

Belongs to the aconitase/IPM isomerase family. LeuC type 1 subfamily. As to quaternary structure, heterodimer of LeuC and LeuD. [4Fe-4S] cluster serves as cofactor.

The catalysed reaction is (2R,3S)-3-isopropylmalate = (2S)-2-isopropylmalate. Its pathway is amino-acid biosynthesis; L-leucine biosynthesis; L-leucine from 3-methyl-2-oxobutanoate: step 2/4. In terms of biological role, catalyzes the isomerization between 2-isopropylmalate and 3-isopropylmalate, via the formation of 2-isopropylmaleate. In Akkermansia muciniphila (strain ATCC BAA-835 / DSM 22959 / JCM 33894 / BCRC 81048 / CCUG 64013 / CIP 107961 / Muc), this protein is 3-isopropylmalate dehydratase large subunit.